The following is a 1145-amino-acid chain: DNA polymerase subunit gamma-1, mitochondrial (1145 aa).

The N-terminal 9 residues, 1 to 9, are a transit peptide targeting the mitochondrion; it reads MQFHLIRKY.

Belongs to the DNA polymerase type-A family. As to quaternary structure, component of the DNA polymerase gamma complex consisting of two subunits: the catalytic subunit DNApol-gamma/DNApolG1 and the accessory subunit PolG2/DNApol-gamma35. Mg(2+) serves as cofactor.

The protein resides in the mitochondrion. The catalysed reaction is DNA(n) + a 2'-deoxyribonucleoside 5'-triphosphate = DNA(n+1) + diphosphate. Its activity is regulated as follows. Stimulated by KCl, and inhibited by the small molecules o 2',3'-dideoxythymidine 5'-triphosphate (d2TTP) and N-ethylmaleimide (NEM). Functionally, as the catalytic component of the DNA polymerase gamma complex is involved in the replication of mitochondrial DNA (mtDNA). Has both 5'-3' DNA polymerase and a highly mispair-specific 3'-5' exonuclease activity. At the end of mtDNA replication DNA ends are ligated to produce a closed circular mtDNA molecule, its exonuclease activity is required for formation of these ligatable ends by preventing DNA synthesis from continuing past the 5'-end of downstream DNA into duplex DNA regions. Does not possess DNA primase activity, does not catalyze strand displacement synthesis and does not contain a 5'-3' exonuclease activity to catalyze nick translation. Important for promoting the elimination of paternal mitochondrial DNA during spermatogenesis, however its exact role in this function has not yet been identified and appears to be independent of its 3'-5'-exonuclease activity and only partially dependent on its DNA polymerase activity. The polypeptide is DNA polymerase subunit gamma-1, mitochondrial (Drosophila melanogaster (Fruit fly)).